A 330-amino-acid chain; its full sequence is Aspartate--ammonia ligase (330 aa).

It belongs to the class-II aminoacyl-tRNA synthetase family. AsnA subfamily.

It localises to the cytoplasm. The catalysed reaction is L-aspartate + NH4(+) + ATP = L-asparagine + AMP + diphosphate + H(+). Its pathway is amino-acid biosynthesis; L-asparagine biosynthesis; L-asparagine from L-aspartate (ammonia route): step 1/1. The polypeptide is Aspartate--ammonia ligase (Streptococcus thermophilus (strain ATCC BAA-250 / LMG 18311)).